We begin with the raw amino-acid sequence, 392 residues long: Succinate--CoA ligase [ADP-forming] subunit beta (392 aa).

The ATP-grasp domain occupies 9-248 (KGILKQFGVA…ITEEDPLEYE (240 aa)). ATP contacts are provided by residues K50, 57–59 (GRG), E103, M106, and E111. Mg(2+) is bound by residues N203 and D217. Residues N268 and 325 to 327 (GIV) each bind substrate.

This sequence belongs to the succinate/malate CoA ligase beta subunit family. Heterotetramer of two alpha and two beta subunits. Requires Mg(2+) as cofactor.

The catalysed reaction is succinate + ATP + CoA = succinyl-CoA + ADP + phosphate. It catalyses the reaction GTP + succinate + CoA = succinyl-CoA + GDP + phosphate. Its pathway is carbohydrate metabolism; tricarboxylic acid cycle; succinate from succinyl-CoA (ligase route): step 1/1. In terms of biological role, succinyl-CoA synthetase functions in the citric acid cycle (TCA), coupling the hydrolysis of succinyl-CoA to the synthesis of either ATP or GTP and thus represents the only step of substrate-level phosphorylation in the TCA. The beta subunit provides nucleotide specificity of the enzyme and binds the substrate succinate, while the binding sites for coenzyme A and phosphate are found in the alpha subunit. This is Succinate--CoA ligase [ADP-forming] subunit beta from Chlorobaculum tepidum (strain ATCC 49652 / DSM 12025 / NBRC 103806 / TLS) (Chlorobium tepidum).